Consider the following 152-residue polypeptide: Ribonuclease pancreatic (152 aa).

Residues 1–24 (MALDKSVILLPLLVLVLLVLGCLG) form the signal peptide. Substrate-binding residues include Lys31 and Arg34. Residue His36 is the Proton acceptor of the active site. Asn46 is a glycosylation site (N-linked (GlcNAc...) asparagine). 4 disulfides stabilise this stretch: Cys50/Cys108, Cys64/Cys119, Cys82/Cys134, and Cys89/Cys96. Substrate-binding positions include 65–69 (KPVNT), Lys90, and Arg109. N-linked (GlcNAc...) asparagine glycosylation is present at Asn112. Catalysis depends on His143, which acts as the Proton donor.

The protein belongs to the pancreatic ribonuclease family. Monomer. Interacts with and forms tight 1:1 complexes with RNH1. Dimerization of two such complexes may occur. Interaction with RNH1 inhibits this protein.

Its subcellular location is the secreted. The catalysed reaction is an [RNA] containing cytidine + H2O = an [RNA]-3'-cytidine-3'-phosphate + a 5'-hydroxy-ribonucleotide-3'-[RNA].. It carries out the reaction an [RNA] containing uridine + H2O = an [RNA]-3'-uridine-3'-phosphate + a 5'-hydroxy-ribonucleotide-3'-[RNA].. Functionally, endonuclease that catalyzes the cleavage of RNA on the 3' side of pyrimidine nucleotides. Acts on single-stranded and double-stranded RNA. The sequence is that of Ribonuclease pancreatic (RNASE1) from Miopithecus talapoin (Angolan talapoin).